Here is a 488-residue protein sequence, read N- to C-terminus: L-arabinose isomerase 2 (488 aa).

Mn(2+)-binding residues include Glu306, Glu331, His348, and His447.

This sequence belongs to the arabinose isomerase family. Mn(2+) is required as a cofactor.

The catalysed reaction is beta-L-arabinopyranose = L-ribulose. It participates in carbohydrate degradation; L-arabinose degradation via L-ribulose; D-xylulose 5-phosphate from L-arabinose (bacterial route): step 1/3. Functionally, catalyzes the conversion of L-arabinose to L-ribulose. The protein is L-arabinose isomerase 2 of Clostridium acetobutylicum (strain ATCC 824 / DSM 792 / JCM 1419 / IAM 19013 / LMG 5710 / NBRC 13948 / NRRL B-527 / VKM B-1787 / 2291 / W).